The chain runs to 396 residues: Phosphopentomutase (396 aa).

Mn(2+) is bound by residues Asp13, Asp288, His293, Asp329, His330, and His341.

The protein belongs to the phosphopentomutase family. Mn(2+) serves as cofactor.

It localises to the cytoplasm. It carries out the reaction 2-deoxy-alpha-D-ribose 1-phosphate = 2-deoxy-D-ribose 5-phosphate. The catalysed reaction is alpha-D-ribose 1-phosphate = D-ribose 5-phosphate. It participates in carbohydrate degradation; 2-deoxy-D-ribose 1-phosphate degradation; D-glyceraldehyde 3-phosphate and acetaldehyde from 2-deoxy-alpha-D-ribose 1-phosphate: step 1/2. Its function is as follows. Isomerase that catalyzes the conversion of deoxy-ribose 1-phosphate (dRib-1-P) and ribose 1-phosphate (Rib-1-P) to deoxy-ribose 5-phosphate (dRib-5-P) and ribose 5-phosphate (Rib-5-P), respectively. The sequence is that of Phosphopentomutase from Clostridium perfringens (strain SM101 / Type A).